The primary structure comprises 311 residues: tRNA dimethylallyltransferase (311 aa).

Residue Gly-8–Ser-15 coordinates ATP. Thr-10 to Ser-15 is a binding site for substrate.

This sequence belongs to the IPP transferase family. As to quaternary structure, monomer. Requires Mg(2+) as cofactor.

The enzyme catalyses adenosine(37) in tRNA + dimethylallyl diphosphate = N(6)-dimethylallyladenosine(37) in tRNA + diphosphate. Functionally, catalyzes the transfer of a dimethylallyl group onto the adenine at position 37 in tRNAs that read codons beginning with uridine, leading to the formation of N6-(dimethylallyl)adenosine (i(6)A). The protein is tRNA dimethylallyltransferase of Mycobacterium leprae (strain Br4923).